We begin with the raw amino-acid sequence, 130 residues long: uncharacterized protein (130 aa).

A helical membrane pass occupies residues proline 8–tyrosine 28.

The protein localises to the membrane. This is an uncharacterized protein from Bacillus anthracis.